The following is a 176-amino-acid chain: Nucleoside triphosphate/diphosphate phosphatase (176 aa).

Arg-23 functions as the Proton donor in the catalytic mechanism. 6 residues coordinate Mg(2+): Asn-87, Asp-103, Asp-105, Asp-107, Asp-120, and Glu-123.

It belongs to the Ntdp family. Mg(2+) is required as a cofactor.

The enzyme catalyses a ribonucleoside 5'-triphosphate + H2O = a ribonucleoside 5'-diphosphate + phosphate + H(+). It carries out the reaction a ribonucleoside 5'-diphosphate + H2O = a ribonucleoside 5'-phosphate + phosphate + H(+). Functionally, has nucleoside phosphatase activity towards nucleoside triphosphates and nucleoside diphosphates. This is Nucleoside triphosphate/diphosphate phosphatase (ygaC) from Bacillus subtilis (strain 168).